Consider the following 278-residue polypeptide: 4-diphosphocytidyl-2-C-methyl-D-erythritol kinase (278 aa).

K9 is a catalytic residue. 89-99 (PVASGIGGGSA) serves as a coordination point for ATP. D128 is a catalytic residue.

The protein belongs to the GHMP kinase family. IspE subfamily.

It catalyses the reaction 4-CDP-2-C-methyl-D-erythritol + ATP = 4-CDP-2-C-methyl-D-erythritol 2-phosphate + ADP + H(+). Its pathway is isoprenoid biosynthesis; isopentenyl diphosphate biosynthesis via DXP pathway; isopentenyl diphosphate from 1-deoxy-D-xylulose 5-phosphate: step 3/6. Its function is as follows. Catalyzes the phosphorylation of the position 2 hydroxy group of 4-diphosphocytidyl-2C-methyl-D-erythritol. The chain is 4-diphosphocytidyl-2-C-methyl-D-erythritol kinase from Cereibacter sphaeroides (strain ATCC 17025 / ATH 2.4.3) (Rhodobacter sphaeroides).